Consider the following 633-residue polypeptide: Leucine-rich repeat and IQ domain-containing protein 3 (633 aa).

LRR repeat units follow at residues 51-72 (SLRV…QSCK), 73-94 (KLIK…NFWS), and 98-119 (NLKL…CVLS). Residues 132 to 179 (CPVSLKKGYRHVLVNSIWPLKALDHHVISDEEIIQNWRLPERFKTFSP) enclose the LRRCT domain. The IQ domain maps to 215–244 (HNSPVLIIQRWIRGFIVRKHLSPYFKHKKH). The tract at residues 324–343 (SKQPRHHIHKGQKAMKAESE) is disordered. A compositionally biased stretch (basic residues) spans 325–336 (KQPRHHIHKGQK). The stretch at 556–617 (IEKWEEQKYK…AKVEYIKTFY (62 aa)) forms a coiled coil.

This is Leucine-rich repeat and IQ domain-containing protein 3 (Lrriq3) from Mus musculus (Mouse).